The following is a 533-amino-acid chain: Phosphoenolpyruvate carboxykinase (ATP) (533 aa).

The substrate site is built by Arg-59, Tyr-199, and Lys-205. ATP-binding positions include Lys-205, His-224, and 240-248 (GLSGTGKTT). Residues Lys-205 and His-224 each contribute to the Mn(2+) site. A Mn(2+)-binding site is contributed by Asp-261. Residues Glu-289, Arg-325, 441 to 442 (RI), and Thr-447 each bind ATP. Arg-325 contacts substrate.

The protein belongs to the phosphoenolpyruvate carboxykinase (ATP) family. Monomer. Mn(2+) serves as cofactor.

Its subcellular location is the cytoplasm. The catalysed reaction is oxaloacetate + ATP = phosphoenolpyruvate + ADP + CO2. Its pathway is carbohydrate biosynthesis; gluconeogenesis. Involved in the gluconeogenesis. Catalyzes the conversion of oxaloacetate (OAA) to phosphoenolpyruvate (PEP) through direct phosphoryl transfer between the nucleoside triphosphate and OAA. This is Phosphoenolpyruvate carboxykinase (ATP) from Idiomarina loihiensis (strain ATCC BAA-735 / DSM 15497 / L2-TR).